A 157-amino-acid chain; its full sequence is uncharacterized protein (157 aa).

In terms of domain architecture, N-acetyltransferase spans 9 to 146 (LLINYKTLDE…GDFYVWHPET (138 aa)).

This is an uncharacterized protein from Bacillus cereus (strain ATCC 10987 / NRS 248).